We begin with the raw amino-acid sequence, 286 residues long: Bifunctional protein FolD (286 aa).

NADP(+) contacts are provided by residues 165–167 (GRS), Ser190, and Val231.

Belongs to the tetrahydrofolate dehydrogenase/cyclohydrolase family. In terms of assembly, homodimer.

The enzyme catalyses (6R)-5,10-methylene-5,6,7,8-tetrahydrofolate + NADP(+) = (6R)-5,10-methenyltetrahydrofolate + NADPH. The catalysed reaction is (6R)-5,10-methenyltetrahydrofolate + H2O = (6R)-10-formyltetrahydrofolate + H(+). It participates in one-carbon metabolism; tetrahydrofolate interconversion. Functionally, catalyzes the oxidation of 5,10-methylenetetrahydrofolate to 5,10-methenyltetrahydrofolate and then the hydrolysis of 5,10-methenyltetrahydrofolate to 10-formyltetrahydrofolate. This Bacillus mycoides (strain KBAB4) (Bacillus weihenstephanensis) protein is Bifunctional protein FolD.